The primary structure comprises 208 residues: Large ribosomal subunit protein uL3 (208 aa).

Belongs to the universal ribosomal protein uL3 family. As to quaternary structure, part of the 50S ribosomal subunit. Forms a cluster with proteins L14 and L19.

One of the primary rRNA binding proteins, it binds directly near the 3'-end of the 23S rRNA, where it nucleates assembly of the 50S subunit. This chain is Large ribosomal subunit protein uL3, found in Salinibacter ruber (strain DSM 13855 / M31).